The following is a 511-amino-acid chain: ATP synthase subunit alpha 1 (511 aa).

174–181 (GDRQTGKT) contributes to the ATP binding site.

It belongs to the ATPase alpha/beta chains family. F-type ATPases have 2 components, CF(1) - the catalytic core - and CF(0) - the membrane proton channel. CF(1) has five subunits: alpha(3), beta(3), gamma(1), delta(1), epsilon(1). CF(0) has four main subunits: a(1), b(1), b'(1) and c(9-12).

It is found in the cell inner membrane. It catalyses the reaction ATP + H2O + 4 H(+)(in) = ADP + phosphate + 5 H(+)(out). Functionally, produces ATP from ADP in the presence of a proton gradient across the membrane. The alpha chain is a regulatory subunit. This Chlorobium luteolum (strain DSM 273 / BCRC 81028 / 2530) (Pelodictyon luteolum) protein is ATP synthase subunit alpha 1.